Here is a 382-residue protein sequence, read N- to C-terminus: Galactokinase (382 aa).

34–37 is a binding site for substrate; it reads EHTD. 124–130 lines the ATP pocket; it reads GAGLSSS. Positions 130 and 162 each coordinate Mg(2+). Asp174 functions as the Proton acceptor in the catalytic mechanism. Tyr223 provides a ligand contact to substrate.

The protein belongs to the GHMP kinase family. GalK subfamily.

The protein resides in the cytoplasm. The enzyme catalyses alpha-D-galactose + ATP = alpha-D-galactose 1-phosphate + ADP + H(+). The protein operates within carbohydrate metabolism; galactose metabolism. In terms of biological role, catalyzes the transfer of the gamma-phosphate of ATP to D-galactose to form alpha-D-galactose-1-phosphate (Gal-1-P). This is Galactokinase from Escherichia coli (strain SMS-3-5 / SECEC).